A 336-amino-acid chain; its full sequence is Ferredoxin--NADP reductase (336 aa).

The FAD site is built by Thr-18, Glu-37, Gln-45, Tyr-50, Val-92, Phe-127, Asp-290, and Ser-331.

The protein belongs to the ferredoxin--NADP reductase type 2 family. In terms of assembly, homodimer. The cofactor is FAD.

It catalyses the reaction 2 reduced [2Fe-2S]-[ferredoxin] + NADP(+) + H(+) = 2 oxidized [2Fe-2S]-[ferredoxin] + NADPH. This is Ferredoxin--NADP reductase from Symbiobacterium thermophilum (strain DSM 24528 / JCM 14929 / IAM 14863 / T).